Reading from the N-terminus, the 393-residue chain is Glutamate 5-kinase 1 (393 aa).

Lysine 17 lines the ATP pocket. Substrate is bound by residues serine 57, aspartate 144, and asparagine 156. An ATP-binding site is contributed by 176 to 177 (SD). The region spanning 282 to 359 (AGSLSIDAGA…AEIAAILGYA (78 aa)) is the PUA domain.

The protein belongs to the glutamate 5-kinase family.

Its subcellular location is the cytoplasm. It catalyses the reaction L-glutamate + ATP = L-glutamyl 5-phosphate + ADP. Its pathway is amino-acid biosynthesis; L-proline biosynthesis; L-glutamate 5-semialdehyde from L-glutamate: step 1/2. Functionally, catalyzes the transfer of a phosphate group to glutamate to form L-glutamate 5-phosphate. The protein is Glutamate 5-kinase 1 of Rhizobium meliloti (strain 1021) (Ensifer meliloti).